The chain runs to 304 residues: Small ribosomal subunit protein uS2 (304 aa).

Ser2 is modified (N-acetylserine). Laminin-binding stretches follow at residues 161 to 180 (IPCN…MLAR) and 205 to 229 (RDPE…EFQG). 5 [DE]-W-[ST] repeats span residues 230–232 (EWS), 245–247 (DWS), 275–277 (DWS), 284–286 (DWS), and 302–304 (DWS). Residues 242 to 304 (EVADWSEGVA…DWGGATSDWS (63 aa)) form a laminin-binding region. The interval 257–304 (IQQFPAGTPAPAPAVKTEDWSTQPATEDWSTAPTAQASDWGGATSDWS) is disordered. The segment covering 276-293 (WSTQPATEDWSTAPTAQA) has biased composition (polar residues).

Belongs to the universal ribosomal protein uS2 family. In terms of assembly, monomer (37LRP) and homodimer (67LR). Component of the small ribosomal subunit. Mature ribosomes consist of a small (40S) and a large (60S) subunit. The 40S subunit contains about 33 different proteins and 1 molecule of RNA (18S). The 60S subunit contains about 49 different proteins and 3 molecules of RNA (28S, 5.8S and 5S). Interacts with rps21. Interacts with several laminins including at least lamb1. Interacts with mdk. Post-translationally, acylated. Acylation may be a prerequisite for conversion of the monomeric 37 kDa laminin receptor precursor (37LRP) to the mature dimeric 67 kDa laminin receptor (67LR), and may provide a mechanism for membrane association. Cleaved by stromelysin-3 (ST3) at the cell surface. Cleavage by stromelysin-3 may be a mechanism to alter cell-extracellular matrix interactions.

Its subcellular location is the cell membrane. It is found in the cytoplasm. It localises to the nucleus. In terms of biological role, required for the assembly and/or stability of the 40S ribosomal subunit. Required for the processing of the 20S rRNA-precursor to mature 18S rRNA in a late step of the maturation of 40S ribosomal subunits. Also functions as a cell surface receptor for laminin. Plays a role in cell adhesion to the basement membrane and in the consequent activation of signaling transduction pathways. May play a role in cell fate determination and tissue morphogenesis. The protein is Small ribosomal subunit protein uS2 (rpsa) of Sparus aurata (Gilthead sea bream).